Consider the following 177-residue polypeptide: ATP-dependent protease subunit HslV (177 aa).

The active site involves threonine 7. 3 residues coordinate Na(+): alanine 162, cysteine 165, and threonine 168.

It belongs to the peptidase T1B family. HslV subfamily. A double ring-shaped homohexamer of HslV is capped on each side by a ring-shaped HslU homohexamer. The assembly of the HslU/HslV complex is dependent on binding of ATP.

The protein localises to the cytoplasm. The catalysed reaction is ATP-dependent cleavage of peptide bonds with broad specificity.. Allosterically activated by HslU binding. In terms of biological role, protease subunit of a proteasome-like degradation complex believed to be a general protein degrading machinery. This chain is ATP-dependent protease subunit HslV, found in Leptospira biflexa serovar Patoc (strain Patoc 1 / Ames).